The sequence spans 96 residues: Large ribosomal subunit protein uL23 (96 aa).

Belongs to the universal ribosomal protein uL23 family. In terms of assembly, part of the 50S ribosomal subunit. Contacts protein L29, and trigger factor when it is bound to the ribosome.

In terms of biological role, one of the early assembly proteins it binds 23S rRNA. One of the proteins that surrounds the polypeptide exit tunnel on the outside of the ribosome. Forms the main docking site for trigger factor binding to the ribosome. In Brevibacillus brevis (strain 47 / JCM 6285 / NBRC 100599), this protein is Large ribosomal subunit protein uL23.